Reading from the N-terminus, the 1036-residue chain is Isoleucine--tRNA ligase (1036 aa).

A 'HIGH' region motif is present at residues 46–56 (PFATGLPHYGH). Residues 589–593 (KMSKR) carry the 'KMSKS' region motif. ATP is bound at residue Lys592.

This sequence belongs to the class-I aminoacyl-tRNA synthetase family. IleS type 2 subfamily. Monomer. Zn(2+) is required as a cofactor.

It is found in the cytoplasm. The enzyme catalyses tRNA(Ile) + L-isoleucine + ATP = L-isoleucyl-tRNA(Ile) + AMP + diphosphate. Its function is as follows. Catalyzes the attachment of isoleucine to tRNA(Ile). As IleRS can inadvertently accommodate and process structurally similar amino acids such as valine, to avoid such errors it has two additional distinct tRNA(Ile)-dependent editing activities. One activity is designated as 'pretransfer' editing and involves the hydrolysis of activated Val-AMP. The other activity is designated 'posttransfer' editing and involves deacylation of mischarged Val-tRNA(Ile). This chain is Isoleucine--tRNA ligase, found in Chlamydia trachomatis serovar L2b (strain UCH-1/proctitis).